The chain runs to 157 residues: Protein Smg (157 aa).

The protein belongs to the Smg family.

This chain is Protein Smg, found in Enterobacter sp. (strain 638).